A 177-amino-acid chain; its full sequence is Phycoerythrin beta subunit (177 aa).

(2R,3E)-phycocyanobilin-binding residues include Tyr18, Lys28, Asn35, and Asp39. The 15,16-dihydrobiliverdin site is built by Cys50, Asp54, and Cys61. Residues Arg77, Cys82, Arg84, and Asp85 each coordinate (2R,3E)-phycocyanobilin. Positions 129, 148, and 149 each coordinate 15,16-dihydrobiliverdin. Residues Pro154, Gly156, and Cys158 each coordinate (2R,3E)-phycocyanobilin.

It belongs to the phycobiliprotein family. As to quaternary structure, heterotetramer of 2 identical alpha chains and 2 identical beta chains which form 2 alpha-beta heterodimers within the heterotetramer. The two alpha-beta heterodimers are rotated to an open configuration in contrast to the closed configuration found in other cryptophyte species due to the insertion of a single amino acid, 'Asp-65', in a conserved region of the alpha chain. In the open form, the central chromophores are not in physical contact but are separated by a water-filled channel. In terms of processing, contains three phycocyanobilin chromophores and one 15,16-dihydrobiliverdin chromophore with binding of the phycocyanobilin chromophores mediated by both the alpha and beta subunits.

The protein resides in the plastid. It localises to the chloroplast thylakoid membrane. Light-harvesting photosynthetic bile pigment-protein from the phycobiliprotein complex. This Hemiselmis virescens protein is Phycoerythrin beta subunit.